The sequence spans 287 residues: Aquaporin PIP1-2 (287 aa).

A disordered region spans residues Met-1 to Pro-37. The Cytoplasmic portion of the chain corresponds to Met-1–Gly-55. A helical transmembrane segment spans residues Ile-56–Val-76. The Extracellular portion of the chain corresponds to Val-77–Gln-89. A helical transmembrane segment spans residues Gly-90–Ser-110. Topologically, residues Gly-111 to Ala-133 are cytoplasmic. An NPA 1 motif is present at residues Asn-115–Ala-117. Residues Leu-134 to Phe-154 traverse the membrane as a helical segment. Over Gln-155 to Lys-175 the chain is Extracellular. A helical membrane pass occupies residues Gly-176–Ala-196. Residues Thr-197–Pro-209 lie on the Cytoplasmic side of the membrane. The helical transmembrane segment at Ile-210–Ile-230 threads the bilayer. Topologically, residues Thr-231–Trp-257 are extracellular. An NPA 2 motif is present at residues Asn-236 to Ala-238. The chain crosses the membrane as a helical span at residues Ile-258–Ile-278. Topologically, residues Arg-279–Ser-287 are cytoplasmic.

It belongs to the MIP/aquaporin (TC 1.A.8) family. PIP (TC 1.A.8.11) subfamily. Barely detectable in roots, leaves and fruits.

The protein localises to the cell membrane. In terms of biological role, water channel required to facilitate the transport of water across cell membrane; mercury-insensitive. Contributes to the tolerance to multiple abiotic stresses including salt (NaCl), cold and water deprivation, by modulating cytosolic K(+)/Na(+) ratio, maintaining osmotic balance, and reducing membrane injury (e.g. oxidative injury). In Musa acuminata subsp. malaccensis (Wild banana), this protein is Aquaporin PIP1-2.